The following is a 437-amino-acid chain: GTPase Obg (437 aa).

The 159-residue stretch at 2–160 (SLFLDTARIE…KILLLELRVL (159 aa)) folds into the Obg domain. Residues 161–338 (ADVGLVGFPS…LLARTSELLA (178 aa)) form the OBG-type G domain. GTP-binding positions include 167-174 (GFPSVGKS), 192-196 (FTTIT), 214-217 (DMPG), 284-287 (NKMD), and 319-321 (SGL). Positions 174 and 194 each coordinate Mg(2+). In terms of domain architecture, OCT spans 359 to 437 (GFEEEEKPFK…IQKFEFEFVD (79 aa)).

Belongs to the TRAFAC class OBG-HflX-like GTPase superfamily. OBG GTPase family. Monomer. It depends on Mg(2+) as a cofactor.

The protein localises to the cytoplasm. Its function is as follows. An essential GTPase which binds GTP, GDP and possibly (p)ppGpp with moderate affinity, with high nucleotide exchange rates and a fairly low GTP hydrolysis rate. Plays a role in control of the cell cycle, stress response, ribosome biogenesis and in those bacteria that undergo differentiation, in morphogenesis control. This Lactococcus lactis subsp. lactis (strain IL1403) (Streptococcus lactis) protein is GTPase Obg.